The chain runs to 195 residues: Holliday junction branch migration complex subunit RuvA (195 aa).

Residues 1 to 64 (MIKGVEGEIT…DRAPEIYGFK (64 aa)) form a domain I region. The interval 65–137 (DRAEYNVFLM…LYDLVKDYAV (73 aa)) is domain II. Positions 137-141 (VEFPK) are flexible linker. The segment at 142–195 (ELSDVSEDAVGALTALGFDMTSAKLAVNEVLKEQTVENTQELVRKALRKLNKTR) is domain III.

This sequence belongs to the RuvA family. Homotetramer. Forms an RuvA(8)-RuvB(12)-Holliday junction (HJ) complex. HJ DNA is sandwiched between 2 RuvA tetramers; dsDNA enters through RuvA and exits via RuvB. An RuvB hexamer assembles on each DNA strand where it exits the tetramer. Each RuvB hexamer is contacted by two RuvA subunits (via domain III) on 2 adjacent RuvB subunits; this complex drives branch migration. In the full resolvosome a probable DNA-RuvA(4)-RuvB(12)-RuvC(2) complex forms which resolves the HJ.

It is found in the cytoplasm. Its function is as follows. The RuvA-RuvB-RuvC complex processes Holliday junction (HJ) DNA during genetic recombination and DNA repair, while the RuvA-RuvB complex plays an important role in the rescue of blocked DNA replication forks via replication fork reversal (RFR). RuvA specifically binds to HJ cruciform DNA, conferring on it an open structure. The RuvB hexamer acts as an ATP-dependent pump, pulling dsDNA into and through the RuvAB complex. HJ branch migration allows RuvC to scan DNA until it finds its consensus sequence, where it cleaves and resolves the cruciform DNA. This chain is Holliday junction branch migration complex subunit RuvA, found in Kosmotoga olearia (strain ATCC BAA-1733 / DSM 21960 / TBF 19.5.1).